The primary structure comprises 1166 residues: Poly [ADP-ribose] polymerase tankyrase-2 (1166 aa).

ANK repeat units lie at residues 57–89 (RKSTPLHFAAGFGRKDVVEYLLQNGANVQARDD), 90–122 (GGLIPLHNACSFGHAEVVNLLLRHGADPNARDN), and 123–155 (WNYTPLHEAAIKGKIDVCIVLLQHGAEPTIRNT). Position 203 is a (3S)-3-hydroxyasparagine; by HIF1AN; partial (asparagine 203). ANK repeat units lie at residues 210–242 (RKSTPLHLAAGYNRVKIVQLLLQHGADVHAKDK), 243–275 (GDLVPLHNACSYGHYEVTELLVKHGACVNAMDL), 276–308 (WQFTPLHEAASKNRVEVCSLLLSYGADPTLLNC), 363–398 (THETALHCAAASPYPKRKQICELLLRKGANINEKTK), 399–431 (EFLTPLHVASEKAHNDVVEVVVKHEAKVNALDN), and 432–464 (LGQTSLHRAAYCGHLQTCRLLLSYGCDPNIISL). Histidine 238 carries the post-translational modification (3S)-3-hydroxyhistidine; by HIF1AN; partial. A (3S)-3-hydroxyasparagine; by HIF1AN; partial modification is found at asparagine 271. Asparagine 427 carries the (3S)-3-hydroxyasparagine; by HIF1AN; partial modification. Asparagine 518 bears the (3S)-3-hydroxyasparagine; by HIF1AN; partial mark. ANK repeat units follow at residues 525–557 (RQSTPLHFAAGYNRVSVVEYLLQHGADVHAKDK), 558–590 (GGLVPLHNACSYGHYEVAELLVKHGAVVNVADL), and 591–623 (WKFTPLHEAAAKGKYEICKLLLQHGADPTKKNR). Positions 545 to 553 (LLQHGADVH) are HIF1AN-binding. At histidine 553 the chain carries (3S)-3-hydroxyhistidine; by HIF1AN; partial. Asparagine 586 carries the (3S)-3-hydroxyasparagine; by HIF1AN; partial modification. 3 positions are modified to (3S)-3-hydroxyasparagine; by HIF1AN; partial: asparagine 671, asparagine 706, and asparagine 739. ANK repeat units lie at residues 678–710 (RHSTPLHLAAGYNNLEVAEYLLQHGADVNAQDK), 711–743 (GGLIPLHNAASYGHVDVAALLIKYNACVNATDK), and 744–776 (WAFTPLHEAAQKGRTQLCALLLAHGADPTLKNQ). Residues 819 to 839 (GATADALSSGPSSPSSLSAAS) are disordered. Residues 822-839 (ADALSSGPSSPSSLSAAS) are compositionally biased toward low complexity. An SAM domain is found at 873–936 (GVDFSITQFV…IKGVERLISG (64 aa)). Residues 959-1164 (SPDDKEFQSV…YQIMRPEGMV (206 aa)) form the PARP catalytic domain. 4 residues coordinate Zn(2+): cysteine 1081, histidine 1084, cysteine 1089, and cysteine 1092.

It belongs to the ARTD/PARP family. As to quaternary structure, oligomerizes and associates with TNKS. Interacts with the cytoplasmic domain of LNPEP/Otase in SLC2A4/GLUT4-vesicles. Binds to the N-terminus of Grb14 and TRF1 with its ankyrin repeat region. Interacts with HIF1AN. Interacts with RNF146; this interaction leads to ubiquitination and proteasomal degradation. Interacts with NUMA1. Ubiquitinated at 'Lys-48' and 'Lys-63' by RNF146 when auto-poly-ADP-ribosylated; this leads to degradation. Deubiquitinated by USP25; leading to stabilization. Post-translationally, ADP-ribosylated (-auto). Poly-ADP-ribosylated protein is recognized by RNF146, followed by ubiquitination. In terms of processing, the crystallographic evidence suggests that the 3-hydroxyhistidine may be the (3S) stereoisomer. As to expression, highly expressed in placenta, skeletal muscle, liver, brain, kidney, heart, thymus, spinal cord, lung, peripheral blood leukocytes, pancreas, lymph nodes, spleen, prostate, testis, ovary, small intestine, colon, mammary gland, breast and breast carcinoma, and in common-type meningioma. Highly expressed in fetal liver, heart and brain.

It localises to the cytoplasm. The protein resides in the golgi apparatus membrane. The protein localises to the nucleus. Its subcellular location is the chromosome. It is found in the telomere. The enzyme catalyses NAD(+) + (ADP-D-ribosyl)n-acceptor = nicotinamide + (ADP-D-ribosyl)n+1-acceptor + H(+).. The catalysed reaction is L-aspartyl-[protein] + NAD(+) = 4-O-(ADP-D-ribosyl)-L-aspartyl-[protein] + nicotinamide. It carries out the reaction L-glutamyl-[protein] + NAD(+) = 5-O-(ADP-D-ribosyl)-L-glutamyl-[protein] + nicotinamide. Its activity is regulated as follows. Specifically inhibited by XAV939, a small molecule, leading to inhibit the Wnt signaling pathway by stabilizing AXIN1 and AXIN2. Inhibited by talazoparib. Poly-ADP-ribosyltransferase involved in various processes such as Wnt signaling pathway, telomere length and vesicle trafficking. Acts as an activator of the Wnt signaling pathway by mediating poly-ADP-ribosylation of AXIN1 and AXIN2, 2 key components of the beta-catenin destruction complex: poly-ADP-ribosylated target proteins are recognized by RNF146, which mediates their ubiquitination and subsequent degradation. Also mediates poly-ADP-ribosylation of BLZF1 and CASC3, followed by recruitment of RNF146 and subsequent ubiquitination. Mediates poly-ADP-ribosylation of TERF1, thereby contributing to the regulation of telomere length. Stimulates 26S proteasome activity. This Homo sapiens (Human) protein is Poly [ADP-ribose] polymerase tankyrase-2.